The following is a 133-amino-acid chain: Protein U17 (133 aa).

Residues 82-102 (FVSVLWCVILVFVVKIKLFFL) traverse the membrane as a helical segment.

Its subcellular location is the membrane. In Homo sapiens (Human), this protein is Protein U17 (U17/U16).